Here is a 127-residue protein sequence, read N- to C-terminus: Odontogenesis-associated phosphoprotein (127 aa).

An N-terminal signal peptide occupies residues 1–23; it reads MAPGFHFSWLLVSWLVVTTVKGQ.

Expressed in enamel organs and not expressed in the heart, kidney, or spleen.

Its subcellular location is the secreted. Functionally, may promote nucleation of hydroxyapatite. This Rattus norvegicus (Rat) protein is Odontogenesis-associated phosphoprotein.